We begin with the raw amino-acid sequence, 107 residues long: METSNGTETWYKSLHAVLKALNTTLHSHLLCRPGPGPGSGTGPDNQTEDHRASLPGRNDNSYMYILFVMFLFAVTVGSLILGYTRSRKVDKRSDPYHVYIKNRVSMI.

N-linked (GlcNAc...) asparagine glycosylation is found at asparagine 5, asparagine 22, and asparagine 45. The disordered stretch occupies residues 31–54; it reads CRPGPGPGSGTGPDNQTEDHRASL. Residues 61 to 81 traverse the membrane as a helical segment; that stretch reads SYMYILFVMFLFAVTVGSLIL. The interval 72–83 is interaction with KCNQ1; the sequence is FAVTVGSLILGY. The Cytoplasmic portion of the chain corresponds to 82-103; the sequence is GYTRSRKVDKRSDPYHVYIKNR.

This sequence belongs to the potassium channel KCNE family. In terms of assembly, interacts with KCNB1. Interacts with KCNC2. Associates with KCNC4/Kv3.4. Interacts with KCNQ1; associates with a KCNQ1:KCNE3 stoichiometry of 4:4; produces a current with nearly instantaneous activation with a linear current-voltage relationship and alters membrane raft localization; affects KCNQ1 structure and gating properties.

The protein localises to the cell membrane. It localises to the cytoplasm. The protein resides in the perikaryon. It is found in the cell projection. Its subcellular location is the dendrite. The protein localises to the membrane raft. Ancillary protein that functions as a regulatory subunit of the voltage-gated potassium (Kv) channel complex composed of pore-forming and potassium-conducting alpha subunits and of regulatory beta subunits. KCNE3 beta subunit modulates the gating kinetics and enhances stability of the channel complex. Alters the gating of the delayed rectifier Kv channel containing KCNB1 alpha subunit. Associates with KCNC4/Kv3.4 alpha subunit to form the subthreshold Kv channel in skeletal muscle and to establish the resting membrane potential (RMP) in muscle cells. Association with KCNQ1/KCLQT1 alpha subunit may form the intestinal cAMP-stimulated potassium channel involved in chloride secretion that produces a current with nearly instantaneous activation with a linear current-voltage relationship. This is Potassium voltage-gated channel subfamily E member 3 from Rattus norvegicus (Rat).